The sequence spans 279 residues: Large ribosomal subunit protein uL2 (279 aa).

Disordered stretches follow at residues 33 to 58 (LLAP…GGGH) and 223 to 279 (GVAM…RKRG). Composition is skewed to basic residues over residues 40 to 58 (KGGR…GGGH) and 269 to 279 (VRRRYATRKRG).

It belongs to the universal ribosomal protein uL2 family. In terms of assembly, part of the 50S ribosomal subunit. Forms a bridge to the 30S subunit in the 70S ribosome.

In terms of biological role, one of the primary rRNA binding proteins. Required for association of the 30S and 50S subunits to form the 70S ribosome, for tRNA binding and peptide bond formation. It has been suggested to have peptidyltransferase activity; this is somewhat controversial. Makes several contacts with the 16S rRNA in the 70S ribosome. This chain is Large ribosomal subunit protein uL2, found in Salinispora arenicola (strain CNS-205).